Reading from the N-terminus, the 213-residue chain is Peroxiredoxin-5, mitochondrial (213 aa).

The transit peptide at 1 to 51 directs the protein to the mitochondrion; it reads MVQLRFCVLGSIAGSVLRASATWTCVAGRAGRKGAGWECGGARSFSSAAVT. Residues 55 to 213 form the Thioredoxin domain; that stretch reads IKVGDTIPSV…SLAPNILSQL (159 aa). K74 carries the N6-acetyllysine modification. At K82 the chain carries N6-acetyllysine; alternate. At K82 the chain carries N6-succinyllysine; alternate. C99 acts as the Cysteine sulfenic acid (-SOH) intermediate in catalysis. C99 is lipidated: S-palmitoyl cysteine. Residues C99 and C203 are joined by a disulfide bond. An N6-succinyllysine modification is found at K115. S170 and S181 each carry phosphoserine. The Microbody targeting signal motif lies at 211 to 213; sequence SQL.

Belongs to the peroxiredoxin family. Prx5 subfamily. In terms of assembly, monomer. In terms of processing, S-palmitoylated. Palmitoylation occurs on the active site, inhibiting its reactivity; therefore PRDX5 palmitoylation status determines its antioxidant capacity. S-palmitoylated. Depalmitoylated by ABHD10.

It localises to the mitochondrion. It is found in the cytoplasm. Its subcellular location is the peroxisome matrix. The enzyme catalyses a hydroperoxide + [thioredoxin]-dithiol = an alcohol + [thioredoxin]-disulfide + H2O. Its function is as follows. Thiol-specific peroxidase that catalyzes the reduction of hydrogen peroxide and organic hydroperoxides to water and alcohols, respectively. Plays a role in cell protection against oxidative stress by detoxifying peroxides and as sensor of hydrogen peroxide-mediated signaling events. This chain is Peroxiredoxin-5, mitochondrial, found in Rattus norvegicus (Rat).